A 254-amino-acid polypeptide reads, in one-letter code: Pimeloyl-[acyl-carrier protein] methyl ester esterase (254 aa).

Residues Trp-20, 80-81, and 141-145 each bind substrate; these read SL and FLALQ. Ser-80 (nucleophile) is an active-site residue. Catalysis depends on residues Asp-205 and His-233. His-233 serves as a coordination point for substrate.

The protein belongs to the AB hydrolase superfamily. Carboxylesterase BioH family. Monomer.

It is found in the cytoplasm. The enzyme catalyses 6-carboxyhexanoyl-[ACP] methyl ester + H2O = 6-carboxyhexanoyl-[ACP] + methanol + H(+). It functions in the pathway cofactor biosynthesis; biotin biosynthesis. The physiological role of BioH is to remove the methyl group introduced by BioC when the pimeloyl moiety is complete. It allows to synthesize pimeloyl-ACP via the fatty acid synthetic pathway through the hydrolysis of the ester bonds of pimeloyl-ACP esters. This Methylococcus capsulatus (strain ATCC 33009 / NCIMB 11132 / Bath) protein is Pimeloyl-[acyl-carrier protein] methyl ester esterase.